We begin with the raw amino-acid sequence, 438 residues long: sn-glycerol-3-phosphate-binding periplasmic protein UgpB (438 aa).

A signal peptide spans 1–23; it reads MKPLHYTASALALGLALMGNAQA. Residues Y65, E89, S144, S270, G307, Y346, and R397 each contribute to the sn-glycerol 3-phosphate site.

This sequence belongs to the bacterial solute-binding protein 1 family. As to quaternary structure, the complex is composed of two ATP-binding proteins (UgpC), two transmembrane proteins (UgpA and UgpE) and a solute-binding protein (UgpB).

It localises to the periplasm. Functionally, part of the ABC transporter complex UgpBAEC involved in sn-glycerol-3-phosphate (G3P) import. Binds G3P. The protein is sn-glycerol-3-phosphate-binding periplasmic protein UgpB (ugpB) of Escherichia coli O157:H7.